Consider the following 1122-residue polypeptide: RecBCD enzyme subunit RecC (1122 aa).

Belongs to the RecC family. Heterotrimer of RecB, RecC and RecD. All subunits contribute to DNA-binding. Interacts with YgbT (Cas1). As to quaternary structure, (Microbial infection) Lambda virus GamS protein interacts with the enzyme without displacing any of the subunits.

After reacting with DNA bearing a Chi site the holoenzyme is disassembled and loses exonuclease activity, DNA unwinding and Chi-directed DNA cleavage; RecB remains complexed with ssDNA, which may prevent holoenzyme reassembly. High levels of Mg(2+) (13 mM MgCl(2+)) or incubation with DNase allow holoenzyme reassembly, suggesting it is DNA bound to RecB that prevents reassembly. Its activity is regulated as follows. (Microbial infection) RecBCD is inhibited by the lambda virus gam protein (both GamL and GamS isoforms); in vitro a short preincubation prior to adding DNA results in maximal inhibition. In terms of biological role, a helicase/nuclease that prepares dsDNA breaks (DSB) for recombinational DNA repair. Binds to DSBs and unwinds DNA via a rapid (&gt;1 kb/second) and highly processive (&gt;30 kb) ATP-dependent bidirectional helicase. Unwinds dsDNA until it encounters a Chi (crossover hotspot instigator, 5'-GCTGGTGG-3') sequence from the 3' direction. Cuts ssDNA a few nucleotides 3' to Chi site, by nicking one strand or switching the strand degraded (depending on the reaction conditions). The properties and activities of the enzyme are changed at Chi. The Chi-altered holoenzyme produces a long 3'-ssDNA overhang which facilitates RecA-binding to the ssDNA for homologous DNA recombination and repair. Holoenzyme degrades any linearized DNA that is unable to undergo homologous recombination. In the holoenzyme this subunit almost certainly recognizes the wild-type Chi sequence, when added to isolated RecB increases its ATP-dependent helicase processivity. The RecBC complex requires the RecD subunit for nuclease activity, but can translocate along ssDNA in both directions. The RecBCD complex does not unwind G-quadruplex DNA. This is RecBCD enzyme subunit RecC from Escherichia coli (strain K12).